We begin with the raw amino-acid sequence, 693 residues long: Transcription activator of gluconeogenesis BC1G_14637 (693 aa).

Over residues 1 to 12 the composition is skewed to acidic residues; the sequence is MSGETEIDDPEV. The segment at 1-75 is disordered; it reads MSGETEIDDP…KFDPKDPLRP (75 aa). A compositionally biased stretch (basic and acidic residues) spans 21 to 49; the sequence is YSDHEQELDVIGKEGDNQEMAEQKVRPDG. Positions 52 to 62 are enriched in polar residues; that stretch reads NGNTVGATATV. A compositionally biased stretch (basic and acidic residues) spans 65–74; the sequence is PKFDPKDPLR. A DNA-binding region (zn(2)-C6 fungal-type) is located at residues 84–112; that stretch reads CFACQRAHLTCGDERPCQRCIKRGLADAC. Polar residues-rich tracts occupy residues 144–155 and 275–287; these read SSNRATAASTPT and SAET…SAGM. 4 disordered regions span residues 144-170, 273-299, 350-413, and 531-567; these read SSNR…QPDT, SGSA…FSNN, TSGS…RNRD, and NLNT…DSNP. The segment covering 356–367 has biased composition (low complexity); it reads SPSTDASPAAST. Residues 369-379 are compositionally biased toward polar residues; sequence GFESSPTTTNY. Residues 394–408 show a composition bias toward low complexity; that stretch reads KSGPSGKLGPSGILG.

Belongs to the ERT1/acuK family.

The protein localises to the nucleus. Its function is as follows. Transcription factor which regulates nonfermentable carbon utilization. Activator of gluconeogenetic genes. The chain is Transcription activator of gluconeogenesis BC1G_14637 from Botryotinia fuckeliana (strain B05.10) (Noble rot fungus).